An 87-amino-acid polypeptide reads, in one-letter code: Toxin CsEv3 (87 aa).

The N-terminal stretch at 1–19 (MNSLLMITACLFLIGTVWA) is a signal peptide. Positions 20–85 (KEGYLVNKST…TYPLPNKSCG (66 aa)) constitute an LCN-type CS-alpha/beta domain. 4 disulfide bridges follow: Cys-31/Cys-84, Cys-35/Cys-60, Cys-44/Cys-65, and Cys-48/Cys-67. Cys-84 bears the Cysteine amide mark.

The protein belongs to the long (4 C-C) scorpion toxin superfamily. Sodium channel inhibitor family. Beta subfamily. In terms of tissue distribution, expressed by the venom gland.

It is found in the secreted. Functionally, beta toxins bind voltage-independently at site-4 of sodium channels (Nav) and shift the voltage of activation toward more negative potentials thereby affecting sodium channel activation and promoting spontaneous and repetitive firing. Induces immediate paralysis in crickets after injection, with a total paralysis occurring within 15-30 minutes and lasting for 1-2 hours. Is also lethal to vertebrate (chicks) when injected in very high dosages (more that 100 mg/kg). The chain is Toxin CsEv3 from Centruroides sculpturatus (Arizona bark scorpion).